The primary structure comprises 630 residues: MSHTETHAFQTEVNQLLKLMIHALYSNKEIFLRELVSNASDALDKLRFESVSNDALSEGESELAIQVGFDKEARTVSIIDNGIGMTRDEVIANIGTIANSGTKKFLENMTGDQAKDSHLIGQFGVGFYASFIVADKVTLTTRKAGDDKSEGTRWESAGEGEYTLETVEKETKGTEITLHLKEDMDEFLDDFRLKSIITTYSDHINFPIKMWQVKLDEEGKETEEKSLEQVNKATAIWTQPKSELSDEDYNNFYQTISHDYENPLAHIHNKVEGTLEYTSLLYLPKKAPFDLYDRDRRYGLKLYVKRVFIMDDAEHLMPTYLRFVRGVIDSNDLPLNVSREILQSNRVVDKIRSASVKRVLDQLAKMAKAEDQSDYETFWDQFGNVMKEGVIEDFANKDKIAKLLRFSSTHESSGPTQRVSLQDYIDRMGEGQEAIYYITADTYAAATGSPHLEMFRKKGIEVLLLTDRIDEWLVSHLTEFEGKQLKSVTSADLKEFDEEADKELSEEDKKAREALTEKVKKAIEDQVSDVKITHRLTDSPACVVSAEGDISAHMARMMEQMGQAMPKQKPVLELNPDHALVKKLDSLEDEPKVKEWSLFLLEQAQLAEGDQLEKPADFIKRMNALLSEVI.

An a; substrate-binding region spans residues 1–339 (MSHTETHAFQ…SNDLPLNVSR (339 aa)). The b stretch occupies residues 340-556 (EILQSNRVVD…EGDISAHMAR (217 aa)). The tract at residues 557 to 630 (MMEQMGQAMP…RMNALLSEVI (74 aa)) is c.

This sequence belongs to the heat shock protein 90 family. Homodimer.

The protein resides in the cytoplasm. Functionally, molecular chaperone. Has ATPase activity. The sequence is that of Chaperone protein HtpG from Hydrogenovibrio crunogenus (strain DSM 25203 / XCL-2) (Thiomicrospira crunogena).